A 208-amino-acid polypeptide reads, in one-letter code: Small ribosomal subunit protein eS8 (208 aa).

Belongs to the eukaryotic ribosomal protein eS8 family. In terms of assembly, component of the small ribosomal subunit. Identified in a IGF2BP1-dependent mRNP granule complex containing untranslated mRNAs. Part of the small subunit (SSU) processome, composed of more than 70 proteins and the RNA chaperone small nucleolar RNA (snoRNA) U3.

The protein localises to the cytoplasm. Its subcellular location is the membrane. It is found in the nucleus. It localises to the nucleolus. Its function is as follows. Component of the small ribosomal subunit. The ribosome is a large ribonucleoprotein complex responsible for the synthesis of proteins in the cell. Part of the small subunit (SSU) processome, first precursor of the small eukaryotic ribosomal subunit. During the assembly of the SSU processome in the nucleolus, many ribosome biogenesis factors, an RNA chaperone and ribosomal proteins associate with the nascent pre-rRNA and work in concert to generate RNA folding, modifications, rearrangements and cleavage as well as targeted degradation of pre-ribosomal RNA by the RNA exosome. This chain is Small ribosomal subunit protein eS8 (rps-8), found in Caenorhabditis elegans.